The chain runs to 92 residues: Small ribosomal subunit protein uS19 (92 aa).

Belongs to the universal ribosomal protein uS19 family.

In terms of biological role, protein S19 forms a complex with S13 that binds strongly to the 16S ribosomal RNA. The chain is Small ribosomal subunit protein uS19 from Streptococcus agalactiae serotype Ia (strain ATCC 27591 / A909 / CDC SS700).